Here is a 336-residue protein sequence, read N- to C-terminus: RHOMBOID-like protein 12, mitochondrial (336 aa).

The transit peptide at 1-85 directs the protein to the mitochondrion; the sequence is MKAIFNRRVV…RGFFASALGN (85 aa). 6 helical membrane passes run 135-155, 185-205, 216-236, 254-274, 276-296, and 307-327; these read VVLGLVIANAGVFVMWRVFNQ, IDIGHIVSNMIGLYFFGTSIA, LYLAGALGGSVFYLIHHAYMA, PGLGASGAVNAIMLLDIFLHP, ATLYLEFFIPVPAMLLGIFLI, and NSNISGSAHLGGAAVAAIAWA. Ser259 functions as the Nucleophile in the catalytic mechanism. Catalysis depends on His315, which acts as the Charge relay system.

The protein belongs to the peptidase S54 family.

It localises to the mitochondrion membrane. In terms of biological role, probable rhomboid-type serine protease that catalyzes intramembrane proteolysis. Unable to cleave either of the yeast Pcp1 substrates in yeast cells. In Arabidopsis thaliana (Mouse-ear cress), this protein is RHOMBOID-like protein 12, mitochondrial.